Here is an 886-residue protein sequence, read N- to C-terminus: Leucine--tRNA ligase (886 aa).

Positions 46-56 match the 'HIGH' region motif; that stretch reads PYPSGKLHMGH. A 'KMSKS' region motif is present at residues 638-642; sequence TMSKS. ATP is bound at residue lysine 641.

Belongs to the class-I aminoacyl-tRNA synthetase family.

The protein resides in the cytoplasm. The catalysed reaction is tRNA(Leu) + L-leucine + ATP = L-leucyl-tRNA(Leu) + AMP + diphosphate. The sequence is that of Leucine--tRNA ligase from Polaromonas sp. (strain JS666 / ATCC BAA-500).